The chain runs to 309 residues: tRNA uridine(34) hydroxylase (309 aa).

Residues 130 to 225 enclose the Rhodanese domain; the sequence is RGEEVVFFDG…YGEKYGNDGL (96 aa). Cys-185 (cysteine persulfide intermediate) is an active-site residue.

This sequence belongs to the TrhO family.

It carries out the reaction uridine(34) in tRNA + AH2 + O2 = 5-hydroxyuridine(34) in tRNA + A + H2O. Its function is as follows. Catalyzes oxygen-dependent 5-hydroxyuridine (ho5U) modification at position 34 in tRNAs. The sequence is that of tRNA uridine(34) hydroxylase from Corynebacterium aurimucosum (strain ATCC 700975 / DSM 44827 / CIP 107346 / CN-1) (Corynebacterium nigricans).